Reading from the N-terminus, the 143-residue chain is UPF0102 protein Acid345_3985 (143 aa).

It belongs to the UPF0102 family.

The polypeptide is UPF0102 protein Acid345_3985 (Koribacter versatilis (strain Ellin345)).